The sequence spans 319 residues: uncharacterized protein (319 aa).

One can recognise an MPN domain in the interval 29–164 (VNISSLALLK…LDAFRSVNPL (136 aa)). Zn(2+) contacts are provided by His-111, His-113, and Asp-124. A JAMM motif motif is present at residues 111–124 (HSHPGFGCWLSSVD).

Belongs to the peptidase M67A family.

This is an uncharacterized protein from Caenorhabditis elegans.